Reading from the N-terminus, the 384-residue chain is MSTAVTFFGQHVLNRVSFLRCSKEFIKKSLNHDSTVFIPFIEGEALISPENGDLVQLSNSVKSYKNILSAIVPLYTTLLNTTRSRSDESGINVTFLGLLEGTDSAFNFEWSNISYKGTPYFGLDIRVTESTLFKKVDFEPIFSYPKVTRDHIFKQTNEDASLYSQGKMYLDWLAKYKFCPGCGSPLFPVEAGTKLQCSNENRNVYCNVRDARINNVCFPRTDPTVIIALTNSDYSKCCLARSKKRYGDFVLYSTIAGFMEPSETIEEACIREIWEETGISCKNIDIVRSQPWPYPCSLMIGCLGIVQFNSKNEVINLNHDDELLDAQWFDTTEIIQALDKYAGGYRVPFKNDINLPGSTTIAFQLINHVCENYKNLRKTSSSHL.

Residues cysteine 179, cysteine 182, cysteine 197, and cysteine 206 each contribute to the Zn(2+) site. In terms of domain architecture, Nudix hydrolase spans 219–351 (PRTDPTVIIA…AGGYRVPFKN (133 aa)). Residues alanine 256, glutamate 272, glutamate 276, and glutamate 322 each coordinate Mg(2+). Substrate is bound by residues 256 to 258 (AGF), glutamate 272, glutamate 276, and glutamate 322. The Nudix box motif lies at 257–278 (GFMEPSETIEEACIREIWEETG). A Microbody targeting signal motif is present at residues 378–380 (KTS).

It belongs to the Nudix hydrolase family. NudC subfamily. Homodimer. Requires Mg(2+) as cofactor. It depends on Zn(2+) as a cofactor.

It is found in the peroxisome. It catalyses the reaction a 5'-end NAD(+)-phospho-ribonucleoside in mRNA + H2O = a 5'-end phospho-adenosine-phospho-ribonucleoside in mRNA + beta-nicotinamide D-ribonucleotide + 2 H(+). It carries out the reaction NAD(+) + H2O = beta-nicotinamide D-ribonucleotide + AMP + 2 H(+). The enzyme catalyses NADH + H2O = reduced beta-nicotinamide D-ribonucleotide + AMP + 2 H(+). Functionally, mRNA decapping enzyme that specifically removes the nicotinamide adenine dinucleotide (NAD) cap from a subset of mRNAs by hydrolyzing the diphosphate linkage to produce nicotinamide mononucleotide (NMN) and 5' monophosphate mRNA. The NAD-cap is present at the 5'-end of some RNAs; in contrast to the canonical N7 methylguanosine (m7G) cap, the NAD cap promotes mRNA decay. Mediates the hydrolysis of some nucleoside diphosphate derivatives. This chain is NAD-capped RNA hydrolase NPY1, found in Saccharomyces cerevisiae (strain ATCC 204508 / S288c) (Baker's yeast).